The primary structure comprises 1894 residues: Fibronectin type III domain-containing protein 1 (1894 aa).

The first 32 residues, M1–S32, serve as a signal peptide directing secretion. A Fibronectin type-III 1 domain is found at H39–G131. N149 carries N-linked (GlcNAc...) asparagine glycosylation. 3 consecutive Fibronectin type-III domains span residues P158 to D258, V262 to S357, and A362 to T457. 4 disordered regions span residues P455–R500, A515–P1271, L1311–G1350, and T1444–G1515. Positions T565–H574 are enriched in basic residues. The span at P614–S625 shows a compositional bias: low complexity. Polar residues predominate over residues T626–D641. 2 stretches are compositionally biased toward low complexity: residues S711–P722 and S759–S778. S717 is subject to Phosphoserine. The span at G786–R799 shows a compositional bias: basic and acidic residues. Polar residues-rich tracts occupy residues K941 to D957 and S1027 to S1060. Acidic residues predominate over residues Q1071–A1088. The segment covering P1166–S1176 has biased composition (polar residues). Residues S1197 to P1209 are compositionally biased toward low complexity. Positions G1211–P1226 are enriched in basic and acidic residues. The span at H1445–T1504 shows a compositional bias: low complexity. Residues A1658–D1752 enclose the Fibronectin type-III 5 domain. Residue N1661 is glycosylated (N-linked (GlcNAc...) asparagine).

As to expression, almost absent from healthy skin; especially in epidermal keratinocytes, skin fibroblasts or endothelial cells and is barely detectable in benign melanocytic naevi. Expressed in the stroma close to skin tumors, in the tumor cells themselves and in the epidermis of psoriasis.

It localises to the secreted. May be an activator of G protein signaling. This chain is Fibronectin type III domain-containing protein 1 (FNDC1), found in Homo sapiens (Human).